Consider the following 512-residue polypeptide: ETS translocation variant 3 (512 aa).

The ETS DNA-binding region spans 35 to 116 (IQLWHFILEL…KGKRFTYKFN (82 aa)). The interval 136-222 (VPQSAPPVPT…NAIGGGGIGH (87 aa)) is disordered. 3 positions are modified to phosphoserine: serine 139, serine 159, and serine 315. Polar residues predominate over residues 158-184 (HSPTNDVQPGRFSASSLTASGQESSNG). Residues 336 to 512 (PEESTQFSIK…QGLATAAADA (177 aa)) are disordered. Residues 380 to 406 (IKVEPASEKDPESLRQSAREKEEHTQE) show a composition bias toward basic and acidic residues. Residue lysine 381 forms a Glycyl lysine isopeptide (Lys-Gly) (interchain with G-Cter in SUMO2) linkage. Lysine 388 is subject to N6-acetyllysine; alternate. Lysine 388 participates in a covalent cross-link: Glycyl lysine isopeptide (Lys-Gly) (interchain with G-Cter in SUMO2); alternate. Acidic residues predominate over residues 443–452 (EPLEVTEDIE). Composition is skewed to basic and acidic residues over residues 453 to 468 (DRPG…KEDA) and 479 to 491 (RWND…ELSK).

The protein belongs to the ETS family.

It localises to the nucleus. Its function is as follows. Transcriptional repressor that contribute to growth arrest during terminal macrophage differentiation by repressing target genes involved in Ras-dependent proliferation. Represses MMP1 promoter activity. The chain is ETS translocation variant 3 (ETV3) from Pan troglodytes (Chimpanzee).